The following is a 311-amino-acid chain: MKSSFSTVSSYSDHKFAVKDAPTTIRDSLRLTNAVEDPGYMTLSLISENKVDDLMFNSKMFQDHMVNDFRPKFSHADSSEIMITLNNLKNDILSTKNIRELESTDLRSEVAKQFAARRAELVSHLNASLRPLIDEVFSMEQRLKAFDAENADFVGKTKQYKSTFRSEVHSRIRAGQSKLDALRHGLQTEINSLEAIIEREFAQAANRLNQEVSNFKESFDASERNIKLQKKHVISGMNEKIKSFAESVAKYLPILKKNSEERRFNQMMMQKNLAEIMTVLSDNSEHFGDYCFSDLVPDTRIFDAIMTTKVD.

Positions Gly-185 to Val-233 form a coiled coil.

In terms of assembly, interacts with EB1.

It is found in the cytoplasm. Its subcellular location is the cytoskeleton. Functionally, giardins are involved in parasite attachment to the intestinal mucosa and in the cytoskeletal disassembly and reassembly that marks the transition from infectious trophozoite to transmissible cyst. They may interact with other cytoskeletal proteins such as microtubules in the microribbons or crossbridges, to maintain the integrity of the ventral disk. Involved in formation of the ventral disk. The polypeptide is Giardin subunit gamma (Giardia intestinalis (Giardia lamblia)).